The primary structure comprises 1213 residues: DNA-directed RNA polymerase subunit beta' (1213 aa).

Zn(2+) is bound by residues Cys60, Cys62, Cys75, and Cys78. Mg(2+) is bound by residues Asp449, Asp451, and Asp453. Residues Cys818, Cys892, Cys899, and Cys902 each coordinate Zn(2+).

Belongs to the RNA polymerase beta' chain family. In terms of assembly, the RNAP catalytic core consists of 2 alpha, 1 beta, 1 beta' and 1 omega subunit. When a sigma factor is associated with the core the holoenzyme is formed, which can initiate transcription. The cofactor is Mg(2+). Zn(2+) serves as cofactor.

It catalyses the reaction RNA(n) + a ribonucleoside 5'-triphosphate = RNA(n+1) + diphosphate. In terms of biological role, DNA-dependent RNA polymerase catalyzes the transcription of DNA into RNA using the four ribonucleoside triphosphates as substrates. The protein is DNA-directed RNA polymerase subunit beta' of Lactiplantibacillus plantarum (strain ATCC BAA-793 / NCIMB 8826 / WCFS1) (Lactobacillus plantarum).